The chain runs to 223 residues: Protein disulfide-isomerase-like protein EhSep2 (223 aa).

An N-terminal signal peptide occupies residues 1 to 17 (MALRSLTLLCAAAGASA). Residues 18–125 (GAIELTPDNF…DELKKFAENE (108 aa)) form the Thioredoxin domain. Residue Sec47 is a non-standard amino acid, selenocysteine. Positions 155–201 (EKRTEMLETLKKELADAESTHEALLKELQATYKESMDKLEKLKEESA) form a coiled coil. The segment at 201-223 (APKIKLLKAATPAPKAEGAKDEV) is disordered. Over residues 203 to 216 (KIKLLKAATPAPKA) the composition is skewed to low complexity. The Prevents secretion from ER motif lies at 220–223 (KDEV).

Belongs to the protein disulfide isomerase family.

The protein localises to the endoplasmic reticulum lumen. In Emiliania huxleyi (Coccolithophore), this protein is Protein disulfide-isomerase-like protein EhSep2 (SEP2).